A 101-amino-acid polypeptide reads, in one-letter code: Putative septation protein SpoVG (101 aa).

This sequence belongs to the SpoVG family.

Functionally, could be involved in septation. This is Putative septation protein SpoVG from Anaeromyxobacter dehalogenans (strain 2CP-C).